A 72-amino-acid chain; its full sequence is MAVEKVNSSSSLAEVIDRILDKGIVIDAWVRVSLVGIELLSIEARIVIASVETYLKYAEAVGLTAQAAVPSV.

It belongs to the gas vesicle GvpA family. In terms of assembly, the gas vesicle shell is 2 nm thick and consists of a single layer of this protein. It forms helical ribs nearly perpendicular to the long axis of the vesicle.

It localises to the gas vesicle shell. Gas vesicles are hollow, gas filled proteinaceous nanostructures found in some microorganisms. During planktonic growth they allow positioning of the organism at a favorable depth for light or nutrient acquisition. GvpA forms the protein shell. The sequence is that of Gas vesicle protein A from Planktothrix agardhii (Oscillatoria agardhii).